The chain runs to 86 residues: Small ribosomal subunit protein bS20 (86 aa).

Residues 1–11 (MANIKSAKKRA) are compositionally biased toward basic residues. Residues 1–26 (MANIKSAKKRAITSEKNRQHNASRRS) form a disordered region.

The protein belongs to the bacterial ribosomal protein bS20 family.

Functionally, binds directly to 16S ribosomal RNA. This is Small ribosomal subunit protein bS20 from Pseudoalteromonas translucida (strain TAC 125).